The sequence spans 341 residues: Guanine nucleotide-binding protein subunit beta (341 aa).

7 WD repeats span residues 54–84 (GHLA…IVWD), 96–126 (LRSS…SIYS), 142–171 (GHTG…ALWN), 183–213 (GHTG…KLFD), 225–255 (GHES…RLFD), 269–299 (NIIC…NVWD), and 311–341 (GHDN…KIWN).

Belongs to the WD repeat G protein beta family. In terms of assembly, g proteins are composed of 3 units, alpha, beta and gamma.

Its function is as follows. Guanine nucleotide-binding proteins (G proteins) are involved as a modulator or transducer in various transmembrane signaling systems. The beta and gamma chains are required for the GTPase activity, for replacement of GDP by GTP, and for G protein-effector interaction. This Loligo forbesii (Veined squid) protein is Guanine nucleotide-binding protein subunit beta.